We begin with the raw amino-acid sequence, 697 residues long: Polyribonucleotide nucleotidyltransferase (697 aa).

Asp487 and Asp493 together coordinate Mg(2+). The KH domain occupies 554–613; the sequence is PRIETIQIKPSKIAVVIGPGGKQIRAIIEQTGVQIDIDDTGLVNIAAIDLVSIEKAKAII. Residues 623–691 enclose the S1 motif domain; that stretch reads GRIYSGKAIS…ERGQIKLSRK (69 aa).

It belongs to the polyribonucleotide nucleotidyltransferase family. Requires Mg(2+) as cofactor.

It is found in the cytoplasm. The catalysed reaction is RNA(n+1) + phosphate = RNA(n) + a ribonucleoside 5'-diphosphate. Involved in mRNA degradation. Catalyzes the phosphorolysis of single-stranded polyribonucleotides processively in the 3'- to 5'-direction. This is Polyribonucleotide nucleotidyltransferase from Protochlamydia amoebophila (strain UWE25).